The sequence spans 241 residues: Attacin-C (241 aa).

The N-terminal stretch at 1–21 is a signal peptide; that stretch reads MSKIVLLIVVIVGVLGSLAVA. Positions 22-23 are excised as a propeptide; that stretch reads LP. At glutamine 24 the chain carries Pyrrolidone carboxylic acid. An O-linked (GalNAc...) threonine glycan is attached at threonine 39. Serine 127 bears the Phosphoserine mark.

The protein belongs to the attacin/sarcotoxin-2 family. Hemolymph (at protein level).

The protein localises to the secreted. Functionally, has antimicrobial activity in synergy with other peptides. Strongest activity observed against E.cloacae. This is Attacin-C from Drosophila melanogaster (Fruit fly).